A 61-amino-acid polypeptide reads, in one-letter code: Cecropin-D (61 aa).

An N-terminal signal peptide occupies residues 1-22 (MKFSKIFVFVFAIVFATASVSA). A propeptide spans 23–24 (AP) (removed by a dipeptidylpeptidase). Gln60 carries the glutamine amide modification.

It belongs to the cecropin family. Mainly in fat body. Lower in hemocytes. Not expressed in midguts, malpighian tubules and silk glands.

It localises to the secreted. Cecropins have lytic and antibacterial activity against several Gram-positive and Gram-negative bacteria. This is Cecropin-D (CECD) from Bombyx mori (Silk moth).